The following is a 510-amino-acid chain: Probable RNA-binding protein 46 (510 aa).

The disordered stretch occupies residues 23-42 (ENGQRKFGGPPPGWEGPPPP). Pro residues predominate over residues 31-42 (GPPPGWEGPPPP). RRM domains lie at 45–123 (REVF…VSLD), 125–207 (CRLF…WAEP), and 220–292 (RVLY…LAKP).

As to expression, expressed in the testis and ovary.

It localises to the cytoplasm. Essential for male and female fertility, playing a crucial role in regulating germ cell development by ensuring the proper progression of meiosis prophase I. The protein is Probable RNA-binding protein 46 (rbm46) of Danio rerio (Zebrafish).